Consider the following 141-residue polypeptide: Nucleoside diphosphate kinase (141 aa).

ATP contacts are provided by K11, F59, R87, T93, R104, and N114. The Pros-phosphohistidine intermediate role is filled by H117.

This sequence belongs to the NDK family. In terms of assembly, homotetramer. Mg(2+) serves as cofactor.

The protein resides in the cytoplasm. The enzyme catalyses a 2'-deoxyribonucleoside 5'-diphosphate + ATP = a 2'-deoxyribonucleoside 5'-triphosphate + ADP. It catalyses the reaction a ribonucleoside 5'-diphosphate + ATP = a ribonucleoside 5'-triphosphate + ADP. Major role in the synthesis of nucleoside triphosphates other than ATP. The ATP gamma phosphate is transferred to the NDP beta phosphate via a ping-pong mechanism, using a phosphorylated active-site intermediate. This chain is Nucleoside diphosphate kinase, found in Burkholderia thailandensis (strain ATCC 700388 / DSM 13276 / CCUG 48851 / CIP 106301 / E264).